A 103-amino-acid chain; its full sequence is Mitochondrial import inner membrane translocase subunit Tim10 B (103 aa).

The Twin CX3C motif signature appears at 28–52 (CFQRCVPSLHHRALDAEEEACLHSC). Disulfide bonds link C28–C52 and C32–C48.

This sequence belongs to the small Tim family. In terms of assembly, component of the TIM22 complex, which core is composed of TIMM22, associated with TIMM10 (TIMM10A and/or TIMM10B), TIMM9, AGK and TIMM29. In terms of tissue distribution, ubiquitous, with highest expression in heart, kidney, liver and skeletal muscle.

Its subcellular location is the mitochondrion inner membrane. In terms of biological role, component of the TIM22 complex, a complex that mediates the import and insertion of multi-pass transmembrane proteins into the mitochondrial inner membrane. The TIM22 complex forms a twin-pore translocase that uses the membrane potential as the external driving force. In the TIM22 complex, it may act as a docking point for the soluble 70 kDa complex that guides the target proteins in transit through the aqueous mitochondrial intermembrane space. This is Mitochondrial import inner membrane translocase subunit Tim10 B (TIMM10B) from Homo sapiens (Human).